The primary structure comprises 327 residues: Putative HTH-type transcriptional regulatory protein MmarC6_0210 (327 aa).

In terms of domain architecture, HTH cro/C1-type spans 128-183; it reads LRETREKLKISVGELAEISRVSRKTIYKYEQNEANPSAEVAIKIEEYLDVPLIKGI. Residues 139–158 constitute a DNA-binding region (H-T-H motif); that stretch reads VGELAEISRVSRKTIYKYEQ.

This Methanococcus maripaludis (strain C6 / ATCC BAA-1332) protein is Putative HTH-type transcriptional regulatory protein MmarC6_0210.